The sequence spans 308 residues: Transcription factor zip-2 (308 aa).

Residues 217-229 are compositionally biased toward polar residues; the sequence is QSSSSSTVETTIT. A disordered region spans residues 217–277; it reads QSSSSSTVET…RESKEERERL (61 aa). The bZIP domain maps to 242–305; that stretch reads SSDYRHKRDK…EDYKRLVMMF (64 aa). Residues 246–276 are basic motif; sequence RHKRDKNNLASQKSRQKRQAKIRESKEERER. Residues 266–277 are compositionally biased toward basic and acidic residues; sequence KIRESKEERERL. The segment at 277–291 is leucine-zipper; that stretch reads LEKRKVQLQAMVLTL.

Belongs to the bZIP family. C/EBP subfamily. As to expression, expressed in the pharynx and throughout the intestine.

The protein resides in the nucleus. In terms of biological role, transcription factor that binds to the promoter and the enhancer regions of target genes. May act together with the bZIP transcription factor, cebp-2. Involved in responding to mitochondrial damage. Plays a role in the delay of age-associated mitochondrial fragmentation and muscle decline. Has a protective role in response to infection by the Gram-negative bacterium P.aeruginosa. Required to prevent P.aeruginosa ToxA-mediated lethality. Required for the activation of several infection response genes including irg-1 and irg-2 following P.aeruginosa infection; target gene activation may involve effects of the bacterial toxin, ToxA, and perhaps other toxins. The protein is Transcription factor zip-2 of Caenorhabditis elegans.